The primary structure comprises 456 residues: Signal recognition particle receptor FtsY (456 aa).

A compositionally biased stretch (basic and acidic residues) spans 1-26 (MFDGLKKKLNRFRNDVEETAEEKAEA). A disordered region spans residues 1–163 (MFDGLKKKLN…DEDDSSGPGR (163 aa)). Residues 27–39 (AADEAESDADAEA) are compositionally biased toward acidic residues. A compositionally biased stretch (low complexity) spans 40–62 (ESAPADTDNAAVEPEASEPAAAD). A compositionally biased stretch (acidic residues) spans 63–81 (PDADAVGDADAGSEADAVD). Residues 82 to 97 (AADAPADAESSSAAVE) are compositionally biased toward low complexity. The segment covering 112 to 134 (PDSEVDAGADTGDEPSGEPTADE) has biased composition (acidic residues). Residues 265 to 272 (GINGVGKT), 347 to 351 (DTAGR), and 405 to 408 (TKAD) each bind GTP.

It belongs to the GTP-binding SRP family. FtsY subfamily. Part of the signal recognition particle protein translocation system, which is composed of SRP and FtsY.

It localises to the cell membrane. It is found in the cytoplasm. The enzyme catalyses GTP + H2O = GDP + phosphate + H(+). Functionally, involved in targeting and insertion of nascent membrane proteins into the cytoplasmic membrane. Acts as a receptor for the complex formed by the signal recognition particle (SRP) and the ribosome-nascent chain (RNC). In Haloferax volcanii (strain ATCC 29605 / DSM 3757 / JCM 8879 / NBRC 14742 / NCIMB 2012 / VKM B-1768 / DS2) (Halobacterium volcanii), this protein is Signal recognition particle receptor FtsY.